Reading from the N-terminus, the 349-residue chain is Protein-glutamate methylesterase/protein-glutamine glutaminase (349 aa).

Residues 5 to 122 (RVLSVDDSAL…REGMLAYSEM (118 aa)) enclose the Response regulatory domain. 4-aspartylphosphate is present on Asp56. The CheB-type methylesterase domain maps to 152–344 (LLSSEKLIAI…QQMLAKISAG (193 aa)). Residues Ser164, His190, and Asp286 contribute to the active site.

This sequence belongs to the CheB family. Post-translationally, phosphorylated by CheA. Phosphorylation of the N-terminal regulatory domain activates the methylesterase activity.

It is found in the cytoplasm. It catalyses the reaction [protein]-L-glutamate 5-O-methyl ester + H2O = L-glutamyl-[protein] + methanol + H(+). It carries out the reaction L-glutaminyl-[protein] + H2O = L-glutamyl-[protein] + NH4(+). Functionally, involved in chemotaxis. Part of a chemotaxis signal transduction system that modulates chemotaxis in response to various stimuli. Catalyzes the demethylation of specific methylglutamate residues introduced into the chemoreceptors (methyl-accepting chemotaxis proteins or MCP) by CheR. Also mediates the irreversible deamidation of specific glutamine residues to glutamic acid. This chain is Protein-glutamate methylesterase/protein-glutamine glutaminase, found in Salmonella choleraesuis (strain SC-B67).